The primary structure comprises 353 residues: Photosystem II D2 protein (353 aa).

Thr2 bears the N-acetylthreonine mark. Position 2 is a phosphothreonine (Thr2). Residues 41 to 61 (CAYFALGGWFTGTTFVTSWYT) form a helical membrane-spanning segment. Chlorophyll a is bound at residue His118. A helical transmembrane segment spans residues 125–141 (GFMLRQFELARSVQLRP). Residues Gln130 and Asn143 each contribute to the pheophytin a site. The helical transmembrane segment at 153–166 (VFVSVFLIYPLGQS) threads the bilayer. His198 lines the chlorophyll a pocket. A helical membrane pass occupies residues 208-228 (AALLCAIHGATVENTLFEDGD). Positions 215 and 262 each coordinate a plastoquinone. His215 provides a ligand contact to Fe cation. A Fe cation-binding site is contributed by His269. The chain crosses the membrane as a helical span at residues 279 to 295 (GSWMSAIGVVGLALNLR).

It belongs to the reaction center PufL/M/PsbA/D family. As to quaternary structure, PSII is composed of 1 copy each of membrane proteins PsbA, PsbB, PsbC, PsbD, PsbE, PsbF, PsbH, PsbI, PsbJ, PsbK, PsbL, PsbM, PsbT, PsbX, PsbY, PsbZ, Psb30/Ycf12, at least 3 peripheral proteins of the oxygen-evolving complex and a large number of cofactors. It forms dimeric complexes. The D1/D2 heterodimer binds P680, chlorophylls that are the primary electron donor of PSII, and subsequent electron acceptors. It shares a non-heme iron and each subunit binds pheophytin, quinone, additional chlorophylls, carotenoids and lipids. There is also a Cl(-1) ion associated with D1 and D2, which is required for oxygen evolution. The PSII complex binds additional chlorophylls, carotenoids and specific lipids. is required as a cofactor.

Its subcellular location is the plastid. The protein resides in the chloroplast thylakoid membrane. It carries out the reaction 2 a plastoquinone + 4 hnu + 2 H2O = 2 a plastoquinol + O2. Its function is as follows. Photosystem II (PSII) is a light-driven water:plastoquinone oxidoreductase that uses light energy to abstract electrons from H(2)O, generating O(2) and a proton gradient subsequently used for ATP formation. It consists of a core antenna complex that captures photons, and an electron transfer chain that converts photonic excitation into a charge separation. The D1/D2 (PsbA/PsbD) reaction center heterodimer binds P680, the primary electron donor of PSII as well as several subsequent electron acceptors. D2 is needed for assembly of a stable PSII complex. The chain is Photosystem II D2 protein from Pinus koraiensis (Korean pine).